The following is a 431-amino-acid chain: Histidine--tRNA ligase (431 aa).

A disordered region spans residues Met-1–Leu-20.

This sequence belongs to the class-II aminoacyl-tRNA synthetase family. Homodimer.

It localises to the cytoplasm. It carries out the reaction tRNA(His) + L-histidine + ATP = L-histidyl-tRNA(His) + AMP + diphosphate + H(+). In Deinococcus geothermalis (strain DSM 11300 / CIP 105573 / AG-3a), this protein is Histidine--tRNA ligase.